The chain runs to 87 residues: Conotoxin Ca6.2 (87 aa).

The N-terminal stretch at Met-1–Gly-19 is a signal peptide. Positions Glu-20–Arg-52 are excised as a propeptide. Intrachain disulfides connect Cys-55-Cys-64, Cys-58-Cys-70, and Cys-63-Cys-84.

Belongs to the conotoxin Q superfamily. In terms of tissue distribution, expressed by the venom duct.

Its subcellular location is the secreted. In Conus caracteristicus (Characteristic cone), this protein is Conotoxin Ca6.2.